The primary structure comprises 210 residues: Uridine kinase (210 aa).

12-19 (GGSGGGKT) is an ATP binding site.

It belongs to the uridine kinase family.

The protein localises to the cytoplasm. The enzyme catalyses uridine + ATP = UMP + ADP + H(+). It carries out the reaction cytidine + ATP = CMP + ADP + H(+). Its pathway is pyrimidine metabolism; CTP biosynthesis via salvage pathway; CTP from cytidine: step 1/3. The protein operates within pyrimidine metabolism; UMP biosynthesis via salvage pathway; UMP from uridine: step 1/1. The sequence is that of Uridine kinase from Streptococcus gordonii (strain Challis / ATCC 35105 / BCRC 15272 / CH1 / DL1 / V288).